The primary structure comprises 200 residues: Vacuolar iron transporter homolog 3 (200 aa).

The Cytoplasmic portion of the chain corresponds to 1–31 (MESHNTLNLDMEKDQEKAFDYSKRAQWLRAA). A helical transmembrane segment spans residues 32 to 52 (VLGANDGLVSTASLMMGVGAV). Over 53–59 (KQNVKIM) the chain is Vacuolar. Residues 60-80 (ILTGFAGLVAGACSMAIGEFV) form a helical membrane-spanning segment. The Cytoplasmic segment spans residues 81–113 (SVYSQYDIEVAQMKRETGGEIEKEKLPSPTQAA). Residues 114 to 134 (AASALAFSLGAMVPLLAAAFV) form a helical membrane-spanning segment. At 135-140 (KEYKVR) the chain is on the vacuolar side. Residues 141 to 161 (IGAIVAAVTLALVMFGWLGAV) form a helical membrane-spanning segment. Over 162-173 (LGKAPVVKSSLR) the chain is Cytoplasmic. The chain crosses the membrane as a helical span at residues 174-194 (VLVGGWLAMAITYGFTKLIGS). Over 195-200 (HSHMYV) the chain is Vacuolar.

The protein belongs to the CCC1 family.

The protein resides in the vacuole membrane. The catalysed reaction is Fe(2+)(in) = Fe(2+)(out). In terms of biological role, probable vacuolar iron transporter that may be involved in the regulation of iron distribution throughout the plant. In Arabidopsis thaliana (Mouse-ear cress), this protein is Vacuolar iron transporter homolog 3.